Reading from the N-terminus, the 300-residue chain is NAD kinase (300 aa).

The active-site Proton acceptor is D75. NAD(+)-binding positions include 75 to 76, 149 to 150, R177, D179, 190 to 195, A214, and Q248; these read DG, ND, and TAYALS.

It belongs to the NAD kinase family. The cofactor is a divalent metal cation.

It is found in the cytoplasm. It carries out the reaction NAD(+) + ATP = ADP + NADP(+) + H(+). In terms of biological role, involved in the regulation of the intracellular balance of NAD and NADP, and is a key enzyme in the biosynthesis of NADP. Catalyzes specifically the phosphorylation on 2'-hydroxyl of the adenosine moiety of NAD to yield NADP. The sequence is that of NAD kinase from Burkholderia lata (strain ATCC 17760 / DSM 23089 / LMG 22485 / NCIMB 9086 / R18194 / 383).